Consider the following 499-residue polypeptide: Glycerol kinase (499 aa).

An ADP-binding site is contributed by T13. The ATP site is built by T13, T14, and S15. T13 contacts sn-glycerol 3-phosphate. Position 17 (R17) interacts with ADP. 4 residues coordinate sn-glycerol 3-phosphate: R83, E84, Y135, and D245. R83, E84, Y135, D245, and Q246 together coordinate glycerol. Residues T267 and G310 each coordinate ADP. Residues T267, G310, Q314, and A411 each coordinate ATP. ADP is bound by residues A411 and N415.

Belongs to the FGGY kinase family.

The enzyme catalyses glycerol + ATP = sn-glycerol 3-phosphate + ADP + H(+). The protein operates within polyol metabolism; glycerol degradation via glycerol kinase pathway; sn-glycerol 3-phosphate from glycerol: step 1/1. With respect to regulation, inhibited by fructose 1,6-bisphosphate (FBP). In terms of biological role, key enzyme in the regulation of glycerol uptake and metabolism. Catalyzes the phosphorylation of glycerol to yield sn-glycerol 3-phosphate. The polypeptide is Glycerol kinase (Xylella fastidiosa (strain 9a5c)).